The sequence spans 126 residues: Profilin-3 (126 aa).

Belongs to the profilin family. Occurs in many kinds of cells as a complex with monomeric actin in a 1:1 ratio. In terms of tissue distribution, in embryos, expression is specifically detected in body wall muscle cells. In adults, expression is localized to a striking dot-like fashion in body wall muscle.

Its subcellular location is the cytoplasm. It localises to the cytoskeleton. In terms of biological role, binds to actin and affects the structure of the cytoskeleton. At high concentrations, profilin prevents the polymerization of actin, whereas it enhances it at low concentrations. By binding to PIP2, it inhibits the formation of IP3 and DG. Also binds to poly(L-proline) and phosphatidylinositol 4,5-bisphosphate micelles. This chain is Profilin-3 (pfn-3), found in Caenorhabditis elegans.